A 206-amino-acid polypeptide reads, in one-letter code: Small ribosomal subunit protein uS4 (206 aa).

Residues 96 to 156 form the S4 RNA-binding domain; the sequence is GRLDNVVYRM…EKAKKQSRVK (61 aa).

Belongs to the universal ribosomal protein uS4 family. As to quaternary structure, part of the 30S ribosomal subunit. Contacts protein S5. The interaction surface between S4 and S5 is involved in control of translational fidelity.

One of the primary rRNA binding proteins, it binds directly to 16S rRNA where it nucleates assembly of the body of the 30S subunit. Functionally, with S5 and S12 plays an important role in translational accuracy. The protein is Small ribosomal subunit protein uS4 of Serratia proteamaculans (strain 568).